The sequence spans 61 residues: Neurotoxin-like protein 1 (61 aa).

Disulfide bonds link Cys-3–Cys-24, Cys-17–Cys-38, Cys-42–Cys-53, and Cys-54–Cys-59.

As to expression, expressed by the venom gland.

Its subcellular location is the secreted. The sequence is that of Neurotoxin-like protein 1 from Causus rhombeatus (Rhombic night adder).